Reading from the N-terminus, the 140-residue chain is Small ribosomal subunit protein uS19 (140 aa).

A disordered region spans residues 120–140 (RPKHSAPGIGATRSSAHVSKK). Positions 131 to 140 (TRSSAHVSKK) are enriched in polar residues.

Belongs to the universal ribosomal protein uS19 family.

In terms of biological role, protein S19 forms a complex with S13 that binds strongly to the 16S ribosomal RNA. In Nanoarchaeum equitans (strain Kin4-M), this protein is Small ribosomal subunit protein uS19.